The primary structure comprises 352 residues: Ribosomal RNA large subunit methyltransferase M (352 aa).

Residues S184, 217 to 220 (APGG), D236, D256, and D272 each bind S-adenosyl-L-methionine. K301 functions as the Proton acceptor in the catalytic mechanism.

The protein belongs to the class I-like SAM-binding methyltransferase superfamily. RNA methyltransferase RlmE family. RlmM subfamily. Monomer.

It is found in the cytoplasm. It carries out the reaction cytidine(2498) in 23S rRNA + S-adenosyl-L-methionine = 2'-O-methylcytidine(2498) in 23S rRNA + S-adenosyl-L-homocysteine + H(+). Functionally, catalyzes the 2'-O-methylation at nucleotide C2498 in 23S rRNA. This Pseudomonas paraeruginosa (strain DSM 24068 / PA7) (Pseudomonas aeruginosa (strain PA7)) protein is Ribosomal RNA large subunit methyltransferase M.